A 497-amino-acid chain; its full sequence is L-carnitine dehydrogenase/betainyl-CoA thioesterase (497 aa).

Positions 1-335 are L-carnitine dehydrogenase; the sequence is MSFITKAACV…AKLWANARKP (335 aa). 11 to 16 contacts NAD(+); sequence GGGVIG. An important for dehydrogenase activity region spans residues 330 to 335; the sequence is ANARKP. The betainyl-CoA thioesterase stretch occupies residues 336–497; the sequence is EADLGDVKPL…AGRFVGQKRA (162 aa).

It in the N-terminal section; belongs to the 3-hydroxyacyl-CoA dehydrogenase family. L-carnitine dehydrogenase subfamily. The protein in the C-terminal section; belongs to the betainyl-CoA thioesterase family. Homodimer.

It is found in the cytoplasm. It catalyses the reaction carnitine + NAD(+) = 3-dehydrocarnitine + NADH + H(+). The enzyme catalyses N,N,N-trimethylglycyl-CoA + H2O = glycine betaine + CoA + H(+). It participates in amine and polyamine metabolism; carnitine metabolism. Its function is as follows. Catalyzes the NAD(+)-dependent oxidation of L-carnitine to 3-dehydrocarnitine. Probably also catalyzes the cleavage of betainyl-CoA (N,N,N-trimethylglycyl-CoA) into glycine betaine and coenzyme A. Despite a high similarity to 3-hydroxyacyl-CoA dehydrogenases, cannot dehydrogenate 3-hydroxybutylate and 3-hydroxybutyl-CoA. Is probably involved in a L-carnitine degradation pathway that allows Rhizobium sp. YS-240 to grow on L-carnitine as the sole source of carbon and nitrogen. The sequence is that of L-carnitine dehydrogenase/betainyl-CoA thioesterase from Rhizobium sp.